The primary structure comprises 443 residues: Protein PRRC1 (443 aa).

The disordered stretch occupies residues 1–165 (MMEESGIETT…FSAPPVTGIL (165 aa)). Residues 29 to 45 (EAHSAATSSFSSPNVSG) are compositionally biased toward polar residues. The span at 59-72 (PSLPPVQPSAPPPF) shows a compositional bias: pro residues. Low complexity-rich tracts occupy residues 81 to 96 (VPLS…SPSP) and 109 to 134 (PPAT…FSVG). A Phosphoserine modification is found at serine 406.

It belongs to the PRRC1 family. As to quaternary structure, interacts with PRKAR1A; resulting in PKA activation.

Its subcellular location is the golgi apparatus. It is found in the cytoplasm. In terms of biological role, may act as a regulator of the protein kinase A (PKA) during embryonic development. The sequence is that of Protein PRRC1 (Prrc1) from Mus musculus (Mouse).